Reading from the N-terminus, the 289-residue chain is Shikimate dehydrogenase (NADP(+)) (289 aa).

Shikimate-binding positions include 22 to 24 and Thr-69; that span reads SRS. The active-site Proton acceptor is the Lys-73. Position 85 (Glu-85) interacts with NADP(+). Residues Asn-94 and Asp-109 each coordinate shikimate. NADP(+) is bound by residues 134 to 138, 158 to 163, and Ile-226; these read GAGGA and NRTLSR. A shikimate-binding site is contributed by Tyr-228. Gly-249 is a binding site for NADP(+).

This sequence belongs to the shikimate dehydrogenase family. As to quaternary structure, homodimer.

The catalysed reaction is shikimate + NADP(+) = 3-dehydroshikimate + NADPH + H(+). Its pathway is metabolic intermediate biosynthesis; chorismate biosynthesis; chorismate from D-erythrose 4-phosphate and phosphoenolpyruvate: step 4/7. Its function is as follows. Involved in the biosynthesis of the chorismate, which leads to the biosynthesis of aromatic amino acids. Catalyzes the reversible NADPH linked reduction of 3-dehydroshikimate (DHSA) to yield shikimate (SA). In Brucella abortus (strain S19), this protein is Shikimate dehydrogenase (NADP(+)).